The following is a 457-amino-acid chain: Cell division protein FtsA (457 aa).

This sequence belongs to the FtsA/MreB family. In terms of assembly, self-interacts. Interacts with FtsZ.

Its subcellular location is the cell membrane. Cell division protein that is involved in the assembly of the Z ring. May serve as a membrane anchor for the Z ring. Increased expression restores growth to a PBP2b (penA) deletion strain as well as mreCD and rodA deletions, but not gpsB or rodZ deletions. Does not restore wild-type cell morphology to the penA deletion. This Streptococcus pneumoniae serotype 2 (strain D39 / NCTC 7466) protein is Cell division protein FtsA.